The sequence spans 168 residues: CASP-like protein UU-1 (168 aa).

The Cytoplasmic segment spans residues 1–17 (MVELESQEAVTVASTAD). A helical transmembrane segment spans residues 18–38 (IAVDVSLRLLAAATSLAAAVV). The Extracellular segment spans residues 39 to 54 (VAANHQQRWGIRVDFT). A helical transmembrane segment spans residues 55–75 (LFQVWIGFVAVNLVCTVYAAA). The Cytoplasmic portion of the chain corresponds to 76-95 (TAAAAARKAMGRWWLHHADA). Residues 96-116 (VVVNLEAAATAGAGAIGSIAM) form a helical membrane-spanning segment. Residues 117–136 (WGNEASGWYAVCRLYRRYCN) lie on the Extracellular side of the membrane. The chain crosses the membrane as a helical span at residues 137 to 157 (AGAAALALSLAAVLLLGVACA). Over 158-168 (RSRYPKMPPTT) the chain is Cytoplasmic.

This sequence belongs to the Casparian strip membrane proteins (CASP) family. As to quaternary structure, homodimer and heterodimers.

It is found in the cell membrane. The protein is CASP-like protein UU-1 of Oryza sativa subsp. japonica (Rice).